The sequence spans 367 residues: 2-aminoethylphosphonate--pyruvate transaminase (367 aa).

Lys-194 is subject to N6-(pyridoxal phosphate)lysine.

This sequence belongs to the class-V pyridoxal-phosphate-dependent aminotransferase family. PhnW subfamily. Homodimer. Requires pyridoxal 5'-phosphate as cofactor.

It carries out the reaction (2-aminoethyl)phosphonate + pyruvate = phosphonoacetaldehyde + L-alanine. In terms of biological role, involved in phosphonate degradation. In Klebsiella pneumoniae subsp. pneumoniae (strain ATCC 700721 / MGH 78578), this protein is 2-aminoethylphosphonate--pyruvate transaminase.